The primary structure comprises 154 residues: Protein X (154 aa).

Residues 68–117 (PCALRFTSARRMETTVNAHQILPKVLHKRTLGLPAMSTTDLEAYFKDCVF) are mitochondrial targeting sequence.

Belongs to the orthohepadnavirus protein X family. May form homodimer. May interact with host CEBPA, CFLAR, CREB1, DDB1, E4F1, HBXIP, HSPD1/HSP60, NFKBIA, POLR2E and SMAD4. Interacts with host SMC5-SMC6 complex and induces its degradation. Interacts with host TRPC4AP; leading to prevent ubiquitination of TRPC4AP. Interacts with host PLSCR1; this interaction promotes ubiquitination and degradation of HBx and impairs HBx-mediated cell proliferation. In terms of processing, a fraction may be phosphorylated in insect cells and HepG2 cells, a human hepatoblastoma cell line. Phosphorylated in vitro by host protein kinase C or mitogen-activated protein kinase. N-acetylated in insect cells.

The protein resides in the host cytoplasm. Its subcellular location is the host nucleus. The protein localises to the host mitochondrion. In terms of biological role, multifunctional protein that plays a role in silencing host antiviral defenses and promoting viral transcription. Does not seem to be essential for HBV infection. May be directly involved in development of cirrhosis and liver cancer (hepatocellular carcinoma). Most of cytosolic activities involve modulation of cytosolic calcium. The effect on apoptosis is controversial depending on the cell types in which the studies have been conducted. May induce apoptosis by localizing in mitochondria and causing loss of mitochondrial membrane potential. May also modulate apoptosis by binding host CFLAR, a key regulator of the death-inducing signaling complex (DISC). Promotes viral transcription by using the host E3 ubiquitin ligase DDB1 to target the SMC5-SMC6 complex to proteasomal degradation. This host complex would otherwise bind to viral episomal DNA, and prevents its transcription. Moderately stimulates transcription of many different viral and cellular transcription elements. Promoters and enhancers stimulated by HBx contain DNA binding sites for NF-kappa-B, AP-1, AP-2, c-EBP, ATF/CREB, or the calcium-activated factor NF-AT. In Homo sapiens (Human), this protein is Protein X.